Here is a 282-residue protein sequence, read N- to C-terminus: 1D-myo-inositol 2-acetamido-2-deoxy-alpha-D-glucopyranoside deacetylase (282 aa).

Residues H6, D9, and H141 each coordinate Zn(2+).

The protein belongs to the MshB deacetylase family. It depends on Zn(2+) as a cofactor.

It catalyses the reaction 1D-myo-inositol 2-acetamido-2-deoxy-alpha-D-glucopyranoside + H2O = 1D-myo-inositol 2-amino-2-deoxy-alpha-D-glucopyranoside + acetate. Catalyzes the deacetylation of 1D-myo-inositol 2-acetamido-2-deoxy-alpha-D-glucopyranoside (GlcNAc-Ins) in the mycothiol biosynthesis pathway. This Nocardiopsis dassonvillei (strain ATCC 23218 / DSM 43111 / CIP 107115 / JCM 7437 / KCTC 9190 / NBRC 14626 / NCTC 10488 / NRRL B-5397 / IMRU 509) (Actinomadura dassonvillei) protein is 1D-myo-inositol 2-acetamido-2-deoxy-alpha-D-glucopyranoside deacetylase.